The following is a 165-amino-acid chain: MSHPALTQLRALRYFDAIPALEPHLRDWLLLEDSMTKRFEQQGKRVSVTLIREAFVGQSEVEEASGLLPSEARYWLREILLCADGEPWLAGRTVVPESTLCGPEQVLQHLGRTPLGRYLFTSSTLTRDFIEIGRDATLWGRRSRLRLSGKPLLLTELFLPASPLY.

Positions 35, 77, 115, and 156 each coordinate substrate.

This sequence belongs to the UbiC family. As to quaternary structure, monomer.

It localises to the cytoplasm. It catalyses the reaction chorismate = 4-hydroxybenzoate + pyruvate. It participates in cofactor biosynthesis; ubiquinone biosynthesis. Removes the pyruvyl group from chorismate, with concomitant aromatization of the ring, to provide 4-hydroxybenzoate (4HB) for the ubiquinone pathway. This Salmonella arizonae (strain ATCC BAA-731 / CDC346-86 / RSK2980) protein is Chorismate pyruvate-lyase.